The following is a 249-amino-acid chain: Triosephosphate isomerase (249 aa).

9–11 contacts substrate; sequence NWK. The Electrophile role is filled by His-95. Glu-167 serves as the catalytic Proton acceptor. Residues Gly-173, Ser-213, and 234–235 each bind substrate; that span reads GG.

Belongs to the triosephosphate isomerase family. As to quaternary structure, homodimer.

Its subcellular location is the cytoplasm. It carries out the reaction D-glyceraldehyde 3-phosphate = dihydroxyacetone phosphate. Its pathway is carbohydrate biosynthesis; gluconeogenesis. The protein operates within carbohydrate degradation; glycolysis; D-glyceraldehyde 3-phosphate from glycerone phosphate: step 1/1. Involved in the gluconeogenesis. Catalyzes stereospecifically the conversion of dihydroxyacetone phosphate (DHAP) to D-glyceraldehyde-3-phosphate (G3P). The chain is Triosephosphate isomerase from Dictyoglomus thermophilum (strain ATCC 35947 / DSM 3960 / H-6-12).